Consider the following 361-residue polypeptide: NAD-dependent protein deacetylase hst2-1 (361 aa).

Residues S16–E276 form the Deacetylase sirtuin-type domain. NAD(+) is bound by residues G43–Y63 and Q126–D129. Catalysis depends on H146, which acts as the Proton acceptor. C154, C157, C178, and C181 together coordinate Zn(2+). NAD(+) is bound by residues G217–S219, N242–E244, and C262. The stretch at E294–Y328 forms a coiled coil. The interval R335–R361 is disordered.

The protein belongs to the sirtuin family. Class I subfamily. The cofactor is Zn(2+).

It localises to the cytoplasm. The protein resides in the nucleus. It carries out the reaction N(6)-acetyl-L-lysyl-[protein] + NAD(+) + H2O = 2''-O-acetyl-ADP-D-ribose + nicotinamide + L-lysyl-[protein]. Its function is as follows. NAD-dependent histone deacetylase, which could function in telomeric silencing, cell cycle progression and chromosome stability. The polypeptide is NAD-dependent protein deacetylase hst2-1 (Emericella nidulans (strain FGSC A4 / ATCC 38163 / CBS 112.46 / NRRL 194 / M139) (Aspergillus nidulans)).